Reading from the N-terminus, the 65-residue chain is Hirudin-3B (65 aa).

Positions 1 to 3 are interaction with thrombin active site; the sequence is VVY. 3 disulfide bridges follow: Cys6-Cys14, Cys16-Cys28, and Cys22-Cys39. The segment at 40–65 is disordered; that stretch reads VTGEGTPKPQSHNDGDFEEIPEEYLQ. O-linked (GalNAc...) threonine glycosylation is present at Thr45. Residues 55–65 form an interaction with fibrinogen-binding exosite of thrombin region; it reads DFEEIPEEYLQ. Acidic residues predominate over residues 55–65; the sequence is DFEEIPEEYLQ. Tyr63 bears the Sulfotyrosine mark.

It belongs to the protease inhibitor I14 (hirudin) family.

It is found in the secreted. Functionally, hirudin is a potent thrombin-specific protease inhibitor. It forms a stable non-covalent complex with alpha-thrombin, thereby abolishing its ability to cleave fibrinogen. In Hirudo medicinalis (Medicinal leech), this protein is Hirudin-3B.